The primary structure comprises 566 residues: Repressible alkaline phosphatase (566 aa).

The segment covering 1 to 11 (MMTHTLPSEQT) has biased composition (polar residues). The segment at 1–27 (MMTHTLPSEQTRLVPGSDSSSRPKKRR) is disordered. The Cytoplasmic segment spans residues 1-33 (MMTHTLPSEQTRLVPGSDSSSRPKKRRISKRSK). The helical transmembrane segment at 34–59 (IIVSTVVCIGLLLVLVQLAFPSSFAL) threads the bilayer. Asp75 is a Mg(2+) binding site. Asp75 lines the Zn(2+) pocket. Ser123 acts as the Phosphoserine intermediate in catalysis. Ser123 carries the phosphoserine modification. Positions 174 and 176 each coordinate Mg(2+). Residue Asn268 is glycosylated (N-linked (GlcNAc...) asparagine). Glu325 provides a ligand contact to Mg(2+). 4 residues coordinate Zn(2+): Asp330, His334, Asp373, and His374. The N-linked (GlcNAc...) asparagine glycan is linked to Asn401. His484 contributes to the Zn(2+) binding site.

It belongs to the alkaline phosphatase family. Mg(2+) is required as a cofactor. Zn(2+) serves as cofactor.

The protein localises to the vacuole membrane. The protein resides in the cytoplasm. The enzyme catalyses a phosphate monoester + H2O = an alcohol + phosphate. It catalyses the reaction (2E,6E)-farnesyl diphosphate + H2O = (2E,6E)-farnesol + diphosphate. It carries out the reaction beta-D-fructose 2,6-bisphosphate + H2O = beta-D-fructose 2-phosphate + phosphate. In terms of biological role, phosphatase with broad substrate specificity. A truncated (soluble) version of the protein is responsible for the production of (E,E)-farnesol from (E,E)-farnesyl diphosphate. Acts as a fructose-2,6-bisphosphate 6-phosphatase. This Saccharomyces cerevisiae (strain ATCC 204508 / S288c) (Baker's yeast) protein is Repressible alkaline phosphatase (PHO8).